A 346-amino-acid chain; its full sequence is Sensor histidine kinase GraS (346 aa).

2 consecutive transmembrane segments (helical) span residues Ile15–Asp35 and Val43–Val63. Residues Glu126 to Asn332 form the Histidine kinase domain. His129 is modified (phosphohistidine; by autocatalysis).

Post-translationally, autophosphorylated.

It localises to the cell membrane. It catalyses the reaction ATP + protein L-histidine = ADP + protein N-phospho-L-histidine.. Functionally, member of the two-component regulatory system GraR/GraS involved in resistance against cationic antimicrobial peptides (CAMPs). GraS probably functions as a sensor protein kinase which is autophosphorylated at a histidine residue and transfers its phosphate group to GraR. In Staphylococcus epidermidis (strain ATCC 35984 / DSM 28319 / BCRC 17069 / CCUG 31568 / BM 3577 / RP62A), this protein is Sensor histidine kinase GraS (graS).